The primary structure comprises 135 residues: Cytochrome b-c1 complex subunit 6, mitochondrial (135 aa).

Residues 1 to 70 (MSFFRDLLES…ETADPLDTLR (70 aa)) form a disordered region. Positions 19 to 64 (EPVEDVEVEQPEDAPEEEVSEETVEEEEDDDEDDDEDDEEEEETAD) are enriched in acidic residues.

It belongs to the UQCRH/QCR6 family. Component of the ubiquinol-cytochrome c oxidoreductase (cytochrome b-c1 complex, complex III, CIII), a multisubunit enzyme composed of 10 subunits. The complex is composed of 3 respiratory subunits cytochrome b (COB), cytochrome c1 (CYT1) and Rieske protein (RIP1), 2 core protein subunits COR1 and QCR2, and 5 low-molecular weight protein subunits QCR6, QCR7, QCR8, QCR9 and QCR10. The complex exists as an obligatory dimer and forms supercomplexes (SCs) in the inner mitochondrial membrane with a monomer or a dimer of cytochrome c oxidase (complex IV, CIV), resulting in 2 different assemblies (supercomplexes III(2)IV and III(2)IV(2)).

It is found in the mitochondrion inner membrane. Its function is as follows. Component of the ubiquinol-cytochrome c oxidoreductase, a multisubunit transmembrane complex that is part of the mitochondrial electron transport chain which drives oxidative phosphorylation. The complex plays an important role in the uptake of multiple carbon sources present in different host niches. The protein is Cytochrome b-c1 complex subunit 6, mitochondrial of Candida albicans (strain SC5314 / ATCC MYA-2876) (Yeast).